Consider the following 410-residue polypeptide: TNF receptor-associated factor family protein DDB_G0279745 (410 aa).

An RING-type; degenerate zinc finger spans residues 27–67 (CVICSFPLFDGLQCKRGHGACKSCWEKIIGENGKKECHSCR). TRAF-type zinc fingers lie at residues 81–154 (YLEK…SLEQ) and 154–213 (QHQN…DESI). Residues 216–284 (LSNSIVEIQK…SMINKLDDSA (69 aa)) adopt a coiled-coil conformation.

It belongs to the TNF receptor-associated factor family.

It is found in the cytoplasm. Functionally, probable adapter protein and signal transducer that links members of the tumor necrosis factor receptor family to different signaling pathways by association with the receptor cytoplasmic domain and kinases. The sequence is that of TNF receptor-associated factor family protein DDB_G0279745 from Dictyostelium discoideum (Social amoeba).